A 188-amino-acid chain; its full sequence is Accessory gene regulator protein B (188 aa).

Transmembrane regions (helical) follow at residues Val-49–Val-69, Val-100–Tyr-122, Leu-143–Phe-163, and Lys-164–Pro-184.

The protein belongs to the AgrB family.

Its subcellular location is the cell membrane. Its function is as follows. Essential for the production of a quorum sensing system signal molecule, the autoinducing peptide (AIP). This quorum sensing system is responsible for the regulation of the expression of virulence factor genes. Involved in the proteolytic processing of AgrD, the precursor of AIP. This chain is Accessory gene regulator protein B, found in Staphylococcus haemolyticus (strain JCSC1435).